Here is a 253-residue protein sequence, read N- to C-terminus: MPTIRGQSILIIGGSSGIGAAVAKYACGDGVKVSVASSNKGRVEKALKKIQALVPASEILGFTVDLSQYDLESRLEKLFKEVVDATGGPLDHVVMTAGTGNMVSLSEYTAKAFQESAPLHFIAPLMVGKVAPRFMNRHWKSSITFTSGAFGKKPAKGYCVIASAVGALDAATRALALELAPIRVNAVSPGPTVTEMFGPPSEALDKAVAAMGAQSLLGKLGRPEDVAEAYIYLMRDANTTGTIVDSNGGAFLQ.

NADP(+) contacts are provided by Ser-15, Ser-16, Ile-18, Ser-38, Asn-39, Arg-42, Asp-65, and Lys-129. Ser-147 serves as the catalytic Proton donor. Thr-194 is a binding site for NADP(+).

The protein belongs to the short-chain dehydrogenases/reductases (SDR) family.

It participates in mycotoxin biosynthesis. Functionally, short-chain dehydrogenase/reductase; part of the core atranone cluster (CAC) which products are predicted to catalyze most or all steps of mycotoxin atranone synthesis, starting from geranylgeranyl pyrophosphate (GGPP). The initial cyclization of GGPP to dolabellane is probably performed by the terpene cyclase ATR13. The Baeyer-Villiger oxidation near the end of the atranone synthesis, which converts atranones D and E to atranones F and G is predicted to be catalyzed by the monooxygenase ATR8. Of the CAC's other predicted gene products, the reducing PKS ATR6 might synthesize a polyketide chain. This polyketide is probably transferred onto the atranone backbone by the polyketide transferase ATR5. Other predicted CAC products include 4 oxygenases (ATR2, ATR3, ATR4, and ATR14), 3 short-chain reductases (ATR7, ATR9, and ATR10), and a methyltransferase (ATR12). These may all be involved in the various steps of atranone biosynthesis, although their specific roles must await experimental determination. The protein is Short-chain dehydrogenase/reductase ATR9 of Stachybotrys chlorohalonatus (strain IBT 40285).